A 251-amino-acid polypeptide reads, in one-letter code: Triosephosphate isomerase (251 aa).

Residue 9–11 (NWK) coordinates substrate. Catalysis depends on histidine 93, which acts as the Electrophile. Glutamate 163 (proton acceptor) is an active-site residue. Residues glycine 169, serine 209, and 230–231 (GG) contribute to the substrate site.

This sequence belongs to the triosephosphate isomerase family. Homodimer.

The protein localises to the cytoplasm. It carries out the reaction D-glyceraldehyde 3-phosphate = dihydroxyacetone phosphate. It participates in carbohydrate biosynthesis; gluconeogenesis. The protein operates within carbohydrate degradation; glycolysis; D-glyceraldehyde 3-phosphate from glycerone phosphate: step 1/1. Its function is as follows. Involved in the gluconeogenesis. Catalyzes stereospecifically the conversion of dihydroxyacetone phosphate (DHAP) to D-glyceraldehyde-3-phosphate (G3P). The protein is Triosephosphate isomerase of Ruegeria pomeroyi (strain ATCC 700808 / DSM 15171 / DSS-3) (Silicibacter pomeroyi).